The sequence spans 172 residues: Small ribosomal subunit protein uS5 (172 aa).

An S5 DRBM domain is found at 17-80; that stretch reads LREKMIAVNR…DEARRKMVKV (64 aa).

This sequence belongs to the universal ribosomal protein uS5 family. As to quaternary structure, part of the 30S ribosomal subunit. Contacts proteins S4 and S8.

With S4 and S12 plays an important role in translational accuracy. In terms of biological role, located at the back of the 30S subunit body where it stabilizes the conformation of the head with respect to the body. The protein is Small ribosomal subunit protein uS5 of Ralstonia nicotianae (strain ATCC BAA-1114 / GMI1000) (Ralstonia solanacearum).